The chain runs to 130 residues: Phosphoribosyl-AMP cyclohydrolase (130 aa).

Residue aspartate 77 participates in Mg(2+) binding. Zn(2+) is bound at residue cysteine 78. Positions 79 and 81 each coordinate Mg(2+). Zn(2+) contacts are provided by cysteine 95 and cysteine 102.

This sequence belongs to the PRA-CH family. In terms of assembly, homodimer. Requires Mg(2+) as cofactor. Zn(2+) is required as a cofactor.

It localises to the cytoplasm. It carries out the reaction 1-(5-phospho-beta-D-ribosyl)-5'-AMP + H2O = 1-(5-phospho-beta-D-ribosyl)-5-[(5-phospho-beta-D-ribosylamino)methylideneamino]imidazole-4-carboxamide. It participates in amino-acid biosynthesis; L-histidine biosynthesis; L-histidine from 5-phospho-alpha-D-ribose 1-diphosphate: step 3/9. In terms of biological role, catalyzes the hydrolysis of the adenine ring of phosphoribosyl-AMP. In Pseudomonas putida (strain ATCC 700007 / DSM 6899 / JCM 31910 / BCRC 17059 / LMG 24140 / F1), this protein is Phosphoribosyl-AMP cyclohydrolase.